The sequence spans 1142 residues: Coiled-coil domain-containing protein 40 (1142 aa).

Disordered stretches follow at residues 1-197 (MAEP…QVLP) and 251-274 (PSTE…AEDE). 2 stretches are compositionally biased toward basic and acidic residues: residues 11 to 27 (SHPE…EGNN) and 35 to 55 (PEKD…HPEE). Positions 63–96 (AIEEGEVETEGEAAVEGEEEAVSYGDAESEEEYY) are enriched in acidic residues. S252 is subject to Phosphoserine. Acidic residues predominate over residues 265 to 274 (EGSDEEAEDE). 5 coiled-coil regions span residues 293 to 319 (AALK…ATKQ), 349 to 470 (HDRH…QAED), 526 to 627 (QAKS…LRRK), 684 to 950 (TSSR…LGQL), and 1005 to 1054 (VRKA…LTRL).

It belongs to the CCDC40 family.

It is found in the cytoplasm. The protein resides in the cell projection. Its subcellular location is the cilium. Required for assembly of dynein regulatory complex (DRC) and inner dynein arm (IDA) complexes, which are responsible for ciliary beat regulation, thereby playing a central role in motility in cilia and flagella. Probably acts together with CCDC39 to form a molecular ruler that determines the 96 nanometer (nm) repeat length and arrangements of components in cilia and flagella. Not required for outer dynein arm complexes assembly. Required for axonemal recruitment of CCDC39. The protein is Coiled-coil domain-containing protein 40 of Homo sapiens (Human).